The chain runs to 279 residues: HTH-type transcriptional regulator HdfR (279 aa).

The region spanning 1–58 (MDTELLKTFLEVSRTRHFGRAAESLYLTQSAVSFRIRQLENQLGVNLFTRHRNNIRLT) is the HTH lysR-type domain. Residues 18–37 (FGRAAESLYLTQSAVSFRIR) constitute a DNA-binding region (H-T-H motif).

It belongs to the LysR transcriptional regulatory family.

Negatively regulates the transcription of the flagellar master operon flhDC by binding to the upstream region of the operon. The polypeptide is HTH-type transcriptional regulator HdfR (Escherichia coli (strain SE11)).